The chain runs to 319 residues: MKRIAILTSGGDAPGMNAATRAVVRKAIYEGLEVYGINYGFLGLVNGDIRKLELGSVGDLLHRGGTFLYSARYPEFATEEGQLKGIEQLKKHQIDGLVVIGGDGSYHGAEALTKRGFPTIGIPGTIDNDISGTDFTIGFDTALNTVLDALDKIRDTATSHERTFIIEVMGRDAGDIALWSGLAGGAEAIIVPEESFNMDDVVDRLNKGRERGKKHSIIVVAEGVMSGNEFAKQLAEYGDYHARVTVLGHVQRGGSPTAFDRVLASRLGARSVELLLEKRGGLAVGIRENRIVENDISEILKEKHTLDQKLFDLASILSI.

G11 serves as a coordination point for ATP. Residue 21–25 coordinates ADP; it reads RAVVR. ATP contacts are provided by residues 72–73 and 102–105; these read RY and GDGS. D103 is a binding site for Mg(2+). 125-127 is a binding site for substrate; it reads TID. D127 (proton acceptor) is an active-site residue. Residue R154 coordinates ADP. Substrate-binding positions include R162 and 169–171; that span reads MGR. Residues 185–187, R211, and 213–215 each bind ADP; these read GAE and KKH. Residues E222, R243, and 249-252 each bind substrate; that span reads HVQR.

Belongs to the phosphofructokinase type A (PFKA) family. ATP-dependent PFK group I subfamily. Prokaryotic clade 'B1' sub-subfamily. Homotetramer. The cofactor is Mg(2+).

It is found in the cytoplasm. The catalysed reaction is beta-D-fructose 6-phosphate + ATP = beta-D-fructose 1,6-bisphosphate + ADP + H(+). The protein operates within carbohydrate degradation; glycolysis; D-glyceraldehyde 3-phosphate and glycerone phosphate from D-glucose: step 3/4. With respect to regulation, allosterically activated by ADP and other diphosphonucleosides, and allosterically inhibited by phosphoenolpyruvate. Its function is as follows. Catalyzes the phosphorylation of D-fructose 6-phosphate to fructose 1,6-bisphosphate by ATP, the first committing step of glycolysis. The polypeptide is ATP-dependent 6-phosphofructokinase (Listeria monocytogenes serotype 4a (strain HCC23)).